A 290-amino-acid chain; its full sequence is CTP-dependent diacylglycerol kinase 1 (290 aa).

Residues 1-33 (MGTEDAIALPNSTLEPRTEAKQRLSSKSHQVSA) are disordered. The Lumenal portion of the chain corresponds to 1-77 (MGTEDAIALP…FITKHEIPRK (77 aa)). Residue Asn11 is glycosylated (N-linked (GlcNAc...) asparagine). Polar residues predominate over residues 23–33 (RLSSKSHQVSA). Phosphoserine is present on residues Ser44, Ser45, and Ser46. The chain crosses the membrane as a helical span at residues 78–95 (VFHSSIGFITLYLYTQGI). Residues 96–103 (NYKNVLWP) are Cytoplasmic-facing. A helical transmembrane segment spans residues 104-124 (LIYAFIILFILDLIRLNWPFF). The Lumenal segment spans residues 125–140 (NMLYCRTVGALMRKKE). A helical membrane pass occupies residues 141-161 (IHTYNGVLWYILGLIFSFNFF). The Cytoplasmic segment spans residues 162–163 (SK). The chain crosses the membrane as a helical span at residues 164–184 (DVTLISLFLLSWSDTAAATIG). Topologically, residues 185-203 (RKYGHLTPKVARNKSLAGS) are lumenal. An N-linked (GlcNAc...) asparagine glycan is attached at Asn197. The chain crosses the membrane as a helical span at residues 204–224 (IAAFTVGVITCWVFYGYFVPA). Residues 225-244 (YSYVNKPGEIQWSPETSRLS) lie on the Cytoplasmic side of the membrane. A helical membrane pass occupies residues 245–265 (LNMLSLLGGVVAALSEGIDLF). Residues 266–290 (NWDDNFTIPVLSSLFMNAVIKTFKK) lie on the Lumenal side of the membrane. Residue Asn270 is glycosylated (N-linked (GlcNAc...) asparagine).

The protein belongs to the DGK1 family. It depends on Ca(2+) as a cofactor. The cofactor is Mg(2+). In terms of processing, CKII-mediated phosphorylation of Ser-45 and Ser-46 regulates its function in the production of PA.

The protein resides in the endoplasmic reticulum membrane. Its subcellular location is the nucleus membrane. It catalyses the reaction a 1,2-diacyl-sn-glycerol + CTP = a 1,2-diacyl-sn-glycero-3-phosphate + CDP + H(+). The enzyme catalyses 1,2-di-(9Z-octadecenoyl)-sn-glycerol + CTP = 1,2-di-(9Z-octadecenoyl)-sn-glycero-3-phosphate + CDP + H(+). With respect to regulation, inhibited by N-ethylmaleimide, dCTP, and sphingoid bases including sphinganine, sphingosine and phytosphingosine. DAG pyrophosphate, cardiolipin, CDP-DAG, and lyso-PA inhibited activity by 23-66%. Also inhibited by Ca(2+) concentrations of more than 1 mM, by addition of EDTA or EGTA at 5 mM, and by 5 mM Mn(2+) and Zn(2+). Stimulated by major membrane phospholipids including phosphatidylcholine, phosphatidylethanolamine, phosphatidylinositol, phosphatidylserine, phosphatidylglycerol, and phosphatidate. Also stimulated to a maximum by addition of TritonX-100 at a concentration of 1 mM, followed by an apparent inhibition of activity at concentrations above 1 mM. Its function is as follows. CTP-dependent diacylglycerol kinase that catalyzes the phosphorylation of diacylglycerol (DAG) to phosphatidate (PA). Controls phosphatidate levels at the nuclear envelope. Counteracts the activity of PA phosphatase PAH1/SMP2, controlling the levels of PA and DAG for the synthesis of triacylglycerol and membrane phospholipids. May be involved in vesicle trafficking between the endoplasmic reticulum and the Golgi apparatus. Required to convert triacylglycerol-derived DAG to PA for phospholipid synthesis during growth resumption from stationary phase in the absence of de novo fatty acid synthesis. Involved in the resistance to nickel chloride and nalidixic acid. This is CTP-dependent diacylglycerol kinase 1 (DGK1) from Saccharomyces cerevisiae (strain ATCC 204508 / S288c) (Baker's yeast).